The sequence spans 560 residues: SET domain-containing protein 4 (560 aa).

Disordered stretches follow at residues 1-61 (MTSP…PSPQ) and 125-157 (KKQNQDDNSKVSVTHNESSKENKITPSMRAEDN). The segment covering 26-38 (SRSSSYSSNSSMS) has biased composition (low complexity). Residues 47–59 (LSVSSAASETLPS) are compositionally biased toward polar residues. Basic and acidic residues predominate over residues 141-157 (ESSKENKITPSMRAEDN). Residues 160 to 210 (KNGCICGSSDSKDELFIQCNKCKTWQHKLCYAFKKSDPIKRDFVCKRCDSD) form a PHD-type zinc finger. The SET domain occupies 346 to 475 (ADIEVRKSSN…KGEEISVEWQ (130 aa)).

It belongs to the SET3 family.

In terms of biological role, putative chromatin regulator. The chain is SET domain-containing protein 4 (SET4) from Saccharomyces cerevisiae (strain ATCC 204508 / S288c) (Baker's yeast).